Here is a 419-residue protein sequence, read N- to C-terminus: MSISGIKGMNDILPSDVETWQFLEREAHRIFKLYGFAEIRVPVVEKTELFCRSIGETTDIVEKEMYTFDDRSSNSLTLRPEGTAPVMRSFIEHKLHALDPVSKLYYMGPMFRYERPQKGRYRQFHQIGAEAIGVDDPMMDAQVLAMLCHYFDAVGIDNVELHVNSLGCQECRPQYRQALTGYLESRLDKLCADCQRRYQTNPLRVLDCKVPACQEATKDAPSVLDLLCSGCNDHFAQVRQHLQELQIDYTINARMVRGLDYYTKTTFEMVTNQLGSQNAVAAGGRYDGLIKELGGPALPGIGFAMGVERLVLMKGEQQVQPPRPDVFLAALGEAAGQKAFALMYRLQRLDLRAEMAFTGKSLKAQMRRAGKLNARYVLMLGEEELASGQAQLRDMDNGSQEPIALEGIEQALLEKTRGN.

The protein belongs to the class-II aminoacyl-tRNA synthetase family. Homodimer.

It is found in the cytoplasm. The catalysed reaction is tRNA(His) + L-histidine + ATP = L-histidyl-tRNA(His) + AMP + diphosphate + H(+). The polypeptide is Histidine--tRNA ligase (Syntrophotalea carbinolica (strain DSM 2380 / NBRC 103641 / GraBd1) (Pelobacter carbinolicus)).